Consider the following 62-residue polypeptide: Metallothionein-4 (62 aa).

A divalent metal cation-binding residues include cysteine 6, cysteine 8, cysteine 14, cysteine 16, cysteine 20, cysteine 22, cysteine 25, cysteine 27, cysteine 30, cysteine 34, cysteine 35, cysteine 37, cysteine 38, cysteine 42, cysteine 45, cysteine 49, cysteine 51, cysteine 58, cysteine 60, and cysteine 61.

Belongs to the metallothionein superfamily. Type 1 family. In terms of tissue distribution, expressed exclusively in stratified squamous epithelia associated with oral epithelia, esophagus, upper stomach, tail, footpads and neonatal skin.

In terms of biological role, seems to bind zinc and copper. Could play a special role in regulating zinc metabolism during the differentiation of stratified epithelia. This Mus musculus (Mouse) protein is Metallothionein-4 (Mt4).